The chain runs to 157 residues: MGVNPPFLCEGGGEVTVDLWQLVEEAVSPLGLDVLEVHFARGELLVRLERKDERPITVADLEEASRHIEAALDREDPIPGSYRLLVESPGPKRPLFTRRHFERFQGLKAKVPGPEGFTGRILRVEGEEVVFQVGDEERRLRIGTFRANLAEWPEEPR.

The protein belongs to the RimP family.

It is found in the cytoplasm. Required for maturation of 30S ribosomal subunits. The chain is Ribosome maturation factor RimP from Thermus thermophilus (strain ATCC BAA-163 / DSM 7039 / HB27).